We begin with the raw amino-acid sequence, 86 residues long: Small ribosomal subunit protein bS20 (86 aa).

The disordered stretch occupies residues 1–27 (MANSKQAKKRAGQSEKRRQHNASRRSM).

Belongs to the bacterial ribosomal protein bS20 family.

Functionally, binds directly to 16S ribosomal RNA. This is Small ribosomal subunit protein bS20 from Colwellia psychrerythraea (strain 34H / ATCC BAA-681) (Vibrio psychroerythus).